We begin with the raw amino-acid sequence, 163 residues long: Olfactory marker protein (163 aa).

A2 bears the N-acetylalanine mark.

Belongs to the olfactory marker protein family. As to quaternary structure, interacts with BEX1 and BEX2. Uniquely associated with mature olfactory receptor neurons.

The protein resides in the cytoplasm. Its function is as follows. May act as a modulator of the olfactory signal-transduction cascade. This chain is Olfactory marker protein (Omp), found in Rattus norvegicus (Rat).